The sequence spans 274 residues: MEIRERILADMQVAETIDAHEEIRKSVEFLKAYLKKNTFLKSFVLGISGGQDSTLTGKLAQMAISEMRAETGDDEYQFFAVSLPYGTQLDESDRQDALNFMEPDNRLTVNIKASVDASVAALAEAGVELSDFAKGNEKARERMKVQYAIAAMHKGVVVGTDHSAEAVTGFYTKYGDGGTDINPLFRLNKRQGKALLKELGCPEHLYLKKPTADLEDNKPALPDEVALGVTYDQIDDYLEGKEVPADAAAKIENWFIKTEHKRHMAITIFDDFWK.

46–53 (GISGGQDS) is an ATP binding site. A Mg(2+)-binding site is contributed by Asp-52. Residue Arg-140 coordinates deamido-NAD(+). Residue Thr-160 participates in ATP binding. A Mg(2+)-binding site is contributed by Glu-165. The deamido-NAD(+) site is built by Lys-173 and Asp-180. Lys-189 and Thr-211 together coordinate ATP. Residue 260-261 (HK) coordinates deamido-NAD(+).

It belongs to the NAD synthetase family. As to quaternary structure, homodimer.

It carries out the reaction deamido-NAD(+) + NH4(+) + ATP = AMP + diphosphate + NAD(+) + H(+). It participates in cofactor biosynthesis; NAD(+) biosynthesis; NAD(+) from deamido-NAD(+) (ammonia route): step 1/1. Functionally, catalyzes the ATP-dependent amidation of deamido-NAD to form NAD. Uses ammonia as a nitrogen source. This chain is NH(3)-dependent NAD(+) synthetase, found in Listeria monocytogenes serotype 4b (strain CLIP80459).